The primary structure comprises 1698 residues: Cullin-7 (1698 aa).

Residues 315–357 (QASDRPRSSARSPGSIFQPQLADVSPGLPAAQAQPSFRRSRRF) are disordered. Ser339 is modified (phosphoserine). One can recognise a CPH domain in the interval 360-433 (RSEFASGNTY…HWHMLEILGF (74 aa)). Residues 601 to 611 (SEDAAKVEAKE) are compositionally biased toward basic and acidic residues. Residues 601–623 (SEDAAKVEAKEPPSQSPNTPLQR) form a disordered region. Positions 814-993 (PINIPFFDVF…HTRLFYMVRA (180 aa)) constitute a DOC domain. The tract at residues 1345-1370 (GASGKEHKSEKEEEAGAAAVVDVAEG) is disordered. A Glycyl lysine isopeptide (Lys-Gly) (interchain with G-Cter in NEDD8) cross-link involves residue Lys1576.

It belongs to the cullin family. Component of the 3M complex, composed of core components CUL7, CCDC8 and OBSL1. Component of the Cul7-RING(FBXW8) complex consisting of CUL7, RBX1, SKP1 and FBXW8. Within the Cul7-RING(FBXW8) complex interacts with FBXW8 and RBX1, but not with SKP1. Interacts with CUL1 (via the C-terminal domain); the interaction seems to be mediated by FBXW8; it is likely specific to FBXW8, but not other F-box proteins. Interacts (via the CPH domain) with p53/TP53; the interaction preferentially involves tetrameric and dimeric p53/TP53; this interaction recruits p53/TP53 for ubiquitination by neddylated CUL1-RBX1. The CUL7-CUL9 heterodimer seems to interact specifically with p53/TP53. Interacts with FBXW8; interaction is mutually exclusive of binding to CUL9 or p53/TP53. Interacts with CUL9; leading to inhibited CUL9 activity. Interacts with OBSL1. Interacts (as part of the 3M complex) with HDAC4 and HDAC5; it is negatively regulated by ANKRA2. As to quaternary structure, (Microbial infection) Interacts with SV40 Large T antigen; this interaction seems to inhibit CUL7. Post-translationally, according to a report, may not be neddylated despite the conserved consensus site for neddylation at Lys-1576. Structural study of the Cul7-RING(FBXW8) reveals that both CUL7 and RBX1 are in orientations that are incompatible with neddylation. As to expression, highly expressed in fetal kidney and adult skeletal muscle. Also abundant in fetal brain, as well as in adult pancreas, kidney, placenta and heart. Detected in trophoblasts, lymphoblasts, osteoblasts, chondrocytes and skin fibroblasts.

The protein resides in the cytoplasm. Its subcellular location is the cytoskeleton. It is found in the microtubule organizing center. It localises to the centrosome. The protein localises to the perinuclear region. The protein resides in the golgi apparatus. The protein operates within protein modification; protein ubiquitination. In terms of biological role, core component of the 3M and Cul7-RING(FBXW8) complexes, which mediate the ubiquitination and subsequent proteasomal degradation of target proteins. Core component of the 3M complex, a complex required to regulate microtubule dynamics and genome integrity. It is unclear how the 3M complex regulates microtubules, it could act by controlling the level of a microtubule stabilizer. The Cul7-RING(FBXW8) complex alone lacks ubiquitination activity and does not promote polyubiquitination and proteasomal degradation of p53/TP53. However it mediates recruitment of p53/TP53 for ubiquitination by neddylated CUL1-RBX1. Interaction with CUL9 is required to inhibit CUL9 activity and ubiquitination of BIRC5. The Cul7-RING(FBXW8) complex also mediates ubiquitination and consequent degradation of target proteins such as GORASP1, IRS1 and MAP4K1/HPK1. Ubiquitination of GORASP1 regulates Golgi morphogenesis and dendrite patterning in brain. Mediates ubiquitination and degradation of IRS1 in a mTOR-dependent manner: the Cul7-RING(FBXW8) complex recognizes and binds IRS1 previously phosphorylated by S6 kinase (RPS6KB1 or RPS6KB2). The Cul7-RING(FBXW8) complex also mediates ubiquitination of MAP4K1/HPK1: recognizes and binds autophosphorylated MAP4K1/HPK1, leading to its degradation, thereby affecting cell proliferation and differentiation. Acts as a regulator in trophoblast cell epithelial-mesenchymal transition and placental development. While the Cul7-RING(FBXW8) and the 3M complexes are associated and involved in common processes, CUL7 and the Cul7-RING(FBXW8) complex may have additional functions. Probably plays a role in the degradation of proteins involved in endothelial proliferation and/or differentiation. The polypeptide is Cullin-7 (CUL7) (Homo sapiens (Human)).